The chain runs to 3122 residues: MFSVRIVTADYYMASPLPGLDTCQSPLTQLPVKKVPVVRVFGATPAGQKTCLHLHGIFPYLYVPYDGYGQQPESYLSQMAFSIDRALNVALGNPSSTAQHVFKVSLVSGMPFYGYHEKERHFMKIYLYNPAMVKRICELLQSGAIMNKCYQPHEAHIPYLLQLFIDYNLYGMNLINLAAVKFRKARRKGNASHATGLFKHQLSGNSPAGTLFRWEEDEIPSSLLLEGVEPLSTCELEVDAVAADILNRLDIEAQIGGNPGLQAIWEDEKQRRRNRNESSQISQPESQDCRFVPATESEKQFQKRLQEVLKQNDFSVTLSGSVDYSNGSQEFSAELTLHSEILSPEMLPCSPANMIEVHKDTDLSKGNTKHKVEEALINEEAILNLIENSQTFQPLTQRLSETPVFMGSSPDESLVHLLAGLESDGYQGEKNRMPLPCHSFGESQNPQNSDDEENEPQIEKEEMELSVVMSQRWDSDIEEHCAKKRSLCRNAHRSSTEEDDSSSEEEMEWTDNSLLFANLSIPQLDGTADENSDNPLNNENSRAHSSVIATSKLSVRPSIFHKDAATLEPPSSAKITFQCKHTSALSSHVLNKDGLTEDLSQPNSTEKGRDNSVTFTKESTYSMKYSGSLSSTVHSDNSHKEICKKDKSLPVSSCESSVFDYEEDIPSVTRQVPSRKYSNMRKIEKDASCIHVNRHISETILGKNSFNFADLNHSKRKLSSEGNEKGNSTSLSGVFPSSLTENCDLLPSSGENRSMAHSLESITDESGLNKLKIRYEEFQEHKMEKPSLSQQAAHYMFFPSVVLSNCLTRPQKLSPVTYKLQSGNKPSRLKLNKKKLIGLQETSTKSTETGATKDSCTHNDLYTGASEKENGLSSDSAKATHGTFENKPPTEHFIDCHFGDGSLEAEQSFGLYGNKYTLRAKRKVNYETEDSESSFVTQNSKISLPHPMEIGENLDGTLKSRKRRKMSKKLPPVIIKYIIINRFRGRKNMLVKLGKIDSKEKQVILTEEKMELYKKLAPLKDFWPKVPDSPATKYPIYPLTPKKSHRRKSKHKSAKKKPGKQHRTNSENIKRTLSFRKKRTHAVLSPPSPSYIAETEDCDLSYSDVMSKLGFLSERSTSPINSSPPRCWSPTDPRAEEIMAAAEKESMLFKGPNVYNTKTVSPRVGKASRARAQVKKSKARLANSSVVTNKRNKRNQTTKLVDDGKKKPRAKQKQRANEKSLSRKHAIPADEKMKPHSEAELTPNHQSVSELTSSSGAQALSKQKEMSQTGPAVDHPLPPAQPTGISAQQRLSNCFSSFLESKKSVDLRTFPSSRDDSHSSVVYSSIGPGISKINIQRSHNQSAMFTRKETTLIQKSIFDLSNHLSQVAQSTQVCSGIISPKTEESSSTQKNCGSSMGKLNEYRSSLESKPEQVCAPNFLHCKDSQQQTVSVSEQSKTSETCSPGNAASEESQTPNCFVTSLKSPIKQIAWEQKQRGFILDMSNFKPEKVKQRSLSEAISQTKALSQCKNQNVSTPSVFGEGQSGLAVLKELLQKRQQKAQSTNVVQDSTSTHQPDKNISVSNEHKKANKRTRPVTSPRKPRTPRRTKPKEQTPRRLKVDPLNLQTSGHLDNSLSDDSPILFSDPGFESCYSLEDSLSPEHNYNFDINTIGQTGFCSFYSGSQFVPADQNLPQKFLSDAVQDLFPGQAIDKSELLSHDRQSCSEEKHHVSDSSPWIRASTLNPELFEKVAMDNNENHRHSQWKNSFHPLTSHSNSIMESFCVQQAENCLTEKSRLNRSSVSKEVFLSLPQANSSDWIQGHNRKEADQSLHSANTSFTTILSSPDGELVDAASEDLELYVSRNNDVLTPTPDSSPRSTSSPLQSKNGSFTPRTAHILKPLMSPPSREEIVATLLDHDLSEAIYQEPFCSNPSDVPEKPREIGGRLLMVETRLPNDLIEFEGDFSLEGLRLWKTAFSAMTQNPRPGSPLRNGQAVVNKESSNSHKMVEDKKIVIMPCKYAPSRQLVQAWLQAKEEYERSKKLPKTELTPVTKSAENVSPSLNPGDTCAVSPQVDKCPHTLSSSAHTKEEVSKSQIALQTSTTGCSQTLLAAASAAVPEEDEDDNDNCYVSYSSPDSPGIPPWQQAASPDFRSLNGDDRHSSPGKELCSLAVENFLKPIKDGIQKSSCSESWEPQVISPIHARARTGKWDPLCLHSTPVMQRKFLEKLPEATGLSPLSVEPKTQKLYNKKGSDADGLRRVLLTTQVENQFAAVNTPKKETSQIDGPSLNNTYGFKVSIQNLQEAKALHEIQNLTLISVELHARTRRDLQPDPEFDPICALFYCISSDTPLPDTEKTELTGVIVIDKDKTVTHQDIRSQTPLLIRSGITGLEVTYAADEKALFQEITNIIKRYDPDILLGYEIQMHSWGYLLQRAAALSVDLCQMISRVPDDKIENRFAAERDDYGSDTMSEINIVGRITLNLWRIMRNEVALTNYTFENVSFHVLHQRFPLFTFRVLSDWFDNKTDLYRWKMVDHYVSRVRGNLQMLEQLDLIGKTSEMARLFGIQFLHVLTRGSQYRVESMMLRIAKPMNYIPVTPSIQQRSQMRAPQCVPLIMEPESRFYSNSVLVLDFQSLYPSIVIAYNYCFSTCLGHVENLGKYDEFKFGCTSLRVPPDLLYQIRHDVTVSPNGVAFVKPSVRKGVLPRMLEEILKTRLMVKQSMKSYKQDRALSRMLNARQLGLKLIANVTFGYTAANFSGRMPCIEVGDSIVHKARETLERAIKLVNDTKKWGARVVYGDTDSMFVLLKGATKEQSFKIGQEIAEAVTATNPRPVKLKFEKVYLPCVLQTKKRYVGYMYETLDQKEPVFDAKGIETVRRDSCPAVSKILERSLKLLFETRDISLIKQYVQRQCMKLVEGKASIQDFIFAKEYRGSFSYRPGACVPALELTRKMLAYDRRSEPRVGERVPYVIIYGTPGLPLIQLIRRPAEVLQDPTLRLNATYYITKQILPPLARIFSLIGIDVFSWYQELPRIQKATSSSRSELEGRKGTISQYFTTLHCPVCDDLTQHGICSKCRSQPQHVAIILNQEIRELERKQEQLIKICRNCTGSFDRHIPCVSLNCPVLFKLSRVNRELSKAPYLRQLLDQF.

5 disordered regions span residues Q270–C289, G425–Q457, L487–W509, L524–S545, and T842–N886. Over residues E277–S286 the composition is skewed to polar residues. The segment covering E497 to W509 has biased composition (acidic residues). Composition is skewed to polar residues over residues D533–S545 and T842–D860. S1029 is subject to Phosphoserine. 7 disordered regions span residues Y1034 to F1075, V1154 to I1285, V1429 to T1453, K1538 to D1616, N1842 to P1869, N1959 to N1979, and A2091 to S2138. Phosphothreonine is present on T1040. 2 stretches are compositionally biased toward basic residues: residues K1042–R1063 and K1166–A1179. Residues R1215–A1239 are compositionally biased toward basic and acidic residues. Residues P1243 to G1270 show a composition bias toward polar residues. Residues V1429–T1440 show a composition bias toward low complexity. Composition is skewed to polar residues over residues C1441 to T1453 and K1538 to S1561. Basic residues predominate over residues K1566–K1587. Residues P1588–V1598 are compositionally biased toward basic and acidic residues. The segment covering N1602 to D1615 has biased composition (polar residues). The mediates interaction with MAD2L2 stretch occupies residues V1844 to D1895. Positions T1846–P1859 are enriched in low complexity. Residues L1860–P1869 show a composition bias toward polar residues. S1964 is modified (phosphoserine). Zn(2+) is bound by residues C3034, C3037, C3046, and C3049. A CysA-type zinc finger spans residues C3034–C3049. Residues C3078, C3081, C3091, and C3096 each contribute to the [4Fe-4S] cluster site. A CysB motif motif is present at residues C3078–C3096.

Belongs to the DNA polymerase type-B family. In terms of assembly, heterodimer with MAD2L2. This dimer forms the minimal DNA polymerase zeta complex (Pol-zeta2), with REV3L bearing DNA polymerase catalytic activity, although its activity is very low in this context. Component of the tetrameric Pol-zeta complex (Pol-zeta4), which consists of REV3L, MAD2L2, POLD2 and POLD3; Pol-zeta4 is the fully active form of DNA polymerase zeta. [4Fe-4S] cluster is required as a cofactor.

It is found in the nucleus. It carries out the reaction DNA(n) + a 2'-deoxyribonucleoside 5'-triphosphate = DNA(n+1) + diphosphate. In terms of biological role, catalytic subunit of the DNA polymerase zeta complex, an error-prone polymerase specialized in translesion DNA synthesis (TLS). Lacks an intrinsic 3'-5' exonuclease activity and thus has no proofreading function. The protein is DNA polymerase zeta catalytic subunit (Rev3l) of Mus musculus (Mouse).